The following is a 484-amino-acid chain: Glycogen synthase (484 aa).

Lys-15 contacts ADP-alpha-D-glucose.

The protein belongs to the glycosyltransferase 1 family. Bacterial/plant glycogen synthase subfamily.

It carries out the reaction [(1-&gt;4)-alpha-D-glucosyl](n) + ADP-alpha-D-glucose = [(1-&gt;4)-alpha-D-glucosyl](n+1) + ADP + H(+). It participates in glycan biosynthesis; glycogen biosynthesis. Synthesizes alpha-1,4-glucan chains using ADP-glucose. This Syntrophotalea carbinolica (strain DSM 2380 / NBRC 103641 / GraBd1) (Pelobacter carbinolicus) protein is Glycogen synthase.